The chain runs to 149 residues: Deoxyuridine 5'-triphosphate nucleotidohydrolase (149 aa).

Substrate-binding positions include 65 to 67 (RSG), asparagine 78, 82 to 84 (TID), and lysine 92.

It belongs to the dUTPase family. Mg(2+) serves as cofactor.

The catalysed reaction is dUTP + H2O = dUMP + diphosphate + H(+). Its pathway is pyrimidine metabolism; dUMP biosynthesis; dUMP from dCTP (dUTP route): step 2/2. This enzyme is involved in nucleotide metabolism: it produces dUMP, the immediate precursor of thymidine nucleotides and it decreases the intracellular concentration of dUTP so that uracil cannot be incorporated into DNA. This chain is Deoxyuridine 5'-triphosphate nucleotidohydrolase, found in Chlorobium chlorochromatii (strain CaD3).